We begin with the raw amino-acid sequence, 571 residues long: Proline--tRNA ligase (571 aa).

It belongs to the class-II aminoacyl-tRNA synthetase family. ProS type 1 subfamily. In terms of assembly, homodimer.

The protein localises to the cytoplasm. It catalyses the reaction tRNA(Pro) + L-proline + ATP = L-prolyl-tRNA(Pro) + AMP + diphosphate. Catalyzes the attachment of proline to tRNA(Pro) in a two-step reaction: proline is first activated by ATP to form Pro-AMP and then transferred to the acceptor end of tRNA(Pro). As ProRS can inadvertently accommodate and process non-cognate amino acids such as alanine and cysteine, to avoid such errors it has two additional distinct editing activities against alanine. One activity is designated as 'pretransfer' editing and involves the tRNA(Pro)-independent hydrolysis of activated Ala-AMP. The other activity is designated 'posttransfer' editing and involves deacylation of mischarged Ala-tRNA(Pro). The misacylated Cys-tRNA(Pro) is not edited by ProRS. This Pseudomonas syringae pv. tomato (strain ATCC BAA-871 / DC3000) protein is Proline--tRNA ligase.